The following is a 142-amino-acid chain: Hemoglobin subunit alpha-A (142 aa).

One can recognise a Globin domain in the interval 2–142 (VLSAADKTNV…VGAVLTAKYR (141 aa)). H59 contributes to the O2 binding site. H88 contacts heme b.

Belongs to the globin family. In terms of assembly, heterotetramer of two alpha chains and two beta chains. In terms of tissue distribution, red blood cells.

Its function is as follows. Involved in oxygen transport from the lung to the various peripheral tissues. In Anas platyrhynchos (Mallard), this protein is Hemoglobin subunit alpha-A (HBAA).